We begin with the raw amino-acid sequence, 871 residues long: Alanine--tRNA ligase (871 aa).

Residues His-561, His-565, Cys-665, and His-669 each contribute to the Zn(2+) site.

The protein belongs to the class-II aminoacyl-tRNA synthetase family. It depends on Zn(2+) as a cofactor.

The protein resides in the cytoplasm. It carries out the reaction tRNA(Ala) + L-alanine + ATP = L-alanyl-tRNA(Ala) + AMP + diphosphate. Its function is as follows. Catalyzes the attachment of alanine to tRNA(Ala) in a two-step reaction: alanine is first activated by ATP to form Ala-AMP and then transferred to the acceptor end of tRNA(Ala). Also edits incorrectly charged Ser-tRNA(Ala) and Gly-tRNA(Ala) via its editing domain. This is Alanine--tRNA ligase from Dehalococcoides mccartyi (strain ATCC BAA-2266 / KCTC 15142 / 195) (Dehalococcoides ethenogenes (strain 195)).